The chain runs to 226 residues: ATP synthase F(0) complex subunit a (226 aa).

A run of 6 helical transmembrane segments spans residues 5–25 (LFAS…LIIL), 68–88 (WSLM…LGLL), 97–117 (QLSM…TTGF), 138–158 (IPML…ALAV), 160–180 (LTAN…ATLA), and 189–209 (TLII…VALI).

It belongs to the ATPase A chain family. Component of the ATP synthase complex composed at least of ATP5F1A/subunit alpha, ATP5F1B/subunit beta, ATP5MC1/subunit c (homooctomer), MT-ATP6/subunit a, MT-ATP8/subunit 8, ATP5ME/subunit e, ATP5MF/subunit f, ATP5MG/subunit g, ATP5MK/subunit k, ATP5MJ/subunit j, ATP5F1C/subunit gamma, ATP5F1D/subunit delta, ATP5F1E/subunit epsilon, ATP5PF/subunit F6, ATP5PB/subunit b, ATP5PD/subunit d, ATP5PO/subunit OSCP. ATP synthase complex consists of a soluble F(1) head domain (subunits alpha(3) and beta(3)) - the catalytic core - and a membrane F(0) domain - the membrane proton channel (subunits c, a, 8, e, f, g, k and j). These two domains are linked by a central stalk (subunits gamma, delta, and epsilon) rotating inside the F1 region and a stationary peripheral stalk (subunits F6, b, d, and OSCP). Interacts with DNAJC30; interaction is direct.

It localises to the mitochondrion inner membrane. The enzyme catalyses H(+)(in) = H(+)(out). Functionally, subunit a, of the mitochondrial membrane ATP synthase complex (F(1)F(0) ATP synthase or Complex V) that produces ATP from ADP in the presence of a proton gradient across the membrane which is generated by electron transport complexes of the respiratory chain. ATP synthase complex consist of a soluble F(1) head domain - the catalytic core - and a membrane F(1) domain - the membrane proton channel. These two domains are linked by a central stalk rotating inside the F(1) region and a stationary peripheral stalk. During catalysis, ATP synthesis in the catalytic domain of F(1) is coupled via a rotary mechanism of the central stalk subunits to proton translocation. With the subunit c (ATP5MC1), forms the proton-conducting channel in the F(0) domain, that contains two crucial half-channels (inlet and outlet) that facilitate proton movement from the mitochondrial intermembrane space (IMS) into the matrix. Protons are taken up via the inlet half-channel and released through the outlet half-channel, following a Grotthuss mechanism. This is ATP synthase F(0) complex subunit a from Gorilla gorilla gorilla (Western lowland gorilla).